Consider the following 138-residue polypeptide: MAPKAEKKPVAEKAEKTTAAKKTKAEKRPPASKEGGDKKGKKKSKKSVETYKIYIFKVLKQVHPDIGISSKAMSIMNSFINDIFEKLAGESAKLARYNKKPTITSREIQTSVRLVLPGELAKHAVSEGTKAVTKFTSA.

Composition is skewed to basic and acidic residues over residues 1–18 (MAPK…EKTT) and 26–38 (EKRP…GGDK). Residues 1 to 46 (MAPKAEKKPVAEKAEKTTAAKKTKAEKRPPASKEGGDKKGKKKSKK) are disordered. N6-acetyllysine occurs at positions 7 and 27. Lysine 134 participates in a covalent cross-link: Glycyl lysine isopeptide (Lys-Gly) (interchain with G-Cter in ubiquitin).

The protein belongs to the histone H2B family. The nucleosome is a histone octamer containing two molecules each of H2A, H2B, H3 and H4 assembled in one H3-H4 heterotetramer and two H2A-H2B heterodimers. The octamer wraps approximately 147 bp of DNA. Can be acetylated to form H2BK6ac and H2BK33ac. In terms of processing, monoubiquitinated to form H2BK143ub1; may give a specific tag for epigenetic transcriptional activation.

It localises to the nucleus. The protein localises to the chromosome. Functionally, core component of nucleosome. Nucleosomes wrap and compact DNA into chromatin, limiting DNA accessibility to the cellular machineries which require DNA as a template. Histones thereby play a central role in transcription regulation, DNA repair, DNA replication and chromosomal stability. DNA accessibility is regulated via a complex set of post-translational modifications of histones, also called histone code, and nucleosome remodeling. The protein is Histone H2B.3 of Triticum aestivum (Wheat).